A 359-amino-acid chain; its full sequence is Probable dual-specificity RNA methyltransferase RlmN (359 aa).

E91 acts as the Proton acceptor in catalysis. Residues 97-329 enclose the Radical SAM core domain; sequence QHYGHSVCVT…KKNGVNCVVR (233 aa). The cysteines at positions 104 and 340 are disulfide-linked. 3 residues coordinate [4Fe-4S] cluster: C111, C115, and C118. Residues 163–164, S195, 218–220, and N296 each bind S-adenosyl-L-methionine; these read GE and SLH. C340 acts as the S-methylcysteine intermediate in catalysis.

This sequence belongs to the radical SAM superfamily. RlmN family. It depends on [4Fe-4S] cluster as a cofactor.

It localises to the cytoplasm. It carries out the reaction adenosine(2503) in 23S rRNA + 2 reduced [2Fe-2S]-[ferredoxin] + 2 S-adenosyl-L-methionine = 2-methyladenosine(2503) in 23S rRNA + 5'-deoxyadenosine + L-methionine + 2 oxidized [2Fe-2S]-[ferredoxin] + S-adenosyl-L-homocysteine. The catalysed reaction is adenosine(37) in tRNA + 2 reduced [2Fe-2S]-[ferredoxin] + 2 S-adenosyl-L-methionine = 2-methyladenosine(37) in tRNA + 5'-deoxyadenosine + L-methionine + 2 oxidized [2Fe-2S]-[ferredoxin] + S-adenosyl-L-homocysteine. Specifically methylates position 2 of adenine 2503 in 23S rRNA and position 2 of adenine 37 in tRNAs. This chain is Probable dual-specificity RNA methyltransferase RlmN, found in Streptococcus pyogenes serotype M5 (strain Manfredo).